A 546-amino-acid polypeptide reads, in one-letter code: 2-isopropylmalate synthase (546 aa).

The region spanning 8–271 is the Pyruvate carboxyltransferase domain; that stretch reads ILIFDTTLRD…NSFFGRSSDS (264 aa). Mn(2+) is bound by residues Asp17, His208, His210, and Asn244. Residues 408 to 546 are regulatory domain; sequence QLSHVQVSCG…EKKVFSNPKN (139 aa).

The protein belongs to the alpha-IPM synthase/homocitrate synthase family. LeuA type 1 subfamily. In terms of assembly, homodimer. Mn(2+) is required as a cofactor.

The protein localises to the cytoplasm. It catalyses the reaction 3-methyl-2-oxobutanoate + acetyl-CoA + H2O = (2S)-2-isopropylmalate + CoA + H(+). It functions in the pathway amino-acid biosynthesis; L-leucine biosynthesis; L-leucine from 3-methyl-2-oxobutanoate: step 1/4. Its function is as follows. Catalyzes the condensation of the acetyl group of acetyl-CoA with 3-methyl-2-oxobutanoate (2-ketoisovalerate) to form 3-carboxy-3-hydroxy-4-methylpentanoate (2-isopropylmalate). The sequence is that of 2-isopropylmalate synthase from Prochlorococcus marinus (strain MIT 9515).